A 140-amino-acid chain; its full sequence is Protein E6 (140 aa).

2 zinc fingers span residues 26–62 (CNFC…CQGC) and 99–135 (CVTC…CSLC).

This sequence belongs to the papillomaviridae E6 protein family. As to quaternary structure, forms homodimers. Interacts with ubiquitin-protein ligase UBE3A/E6-AP; this interaction stimulates UBE3A ubiquitin activity. Interacts with host BAK1.

It localises to the host cytoplasm. The protein localises to the host nucleus. Functionally, plays a major role in the induction and maintenance of cellular transformation. E6 associates with host UBE3A/E6-AP ubiquitin-protein ligase and modulates its activity. Protects host keratinocytes from apoptosis by mediating the degradation of host BAK1. May also inhibit host immune response. This Human papillomavirus type 1 (Human papillomavirus type 1a) protein is Protein E6.